A 615-amino-acid polypeptide reads, in one-letter code: Zinc finger protein 181 (615 aa).

One can recognise a KRAB domain in the interval 48-120; it reads VTFSDVAIDF…EKKLSKGLIP (73 aa). Glycyl lysine isopeptide (Lys-Gly) (interchain with G-Cter in SUMO2) cross-links involve residues K153 and K170. 11 C2H2-type zinc fingers span residues 281–303, 309–331, 337–359, 365–387, 393–415, 421–443, 449–471, 477–499, 505–527, 533–555, and 561–583; these read YTCSECGKAFGKQSILNRHWRIH, YECRECGKTFSHGSSLTRHLISH, YKCIECGKAFSHVSSLTNHQSTH, YECMNCGKSFSRVSHLIEHLRIH, YECRICGKAFIHRSSLIHHQKIH, YECRECGKAFCCSSHLTRHQRIH, YECNKCLKVFSSLSFLVQHQSIH, FECQKCRKSFNQLESLNMHLRNH, YECSICGKAFSHRSSLLQHHRIH, YECIKCGKTFSCSSNLTVHQRIH, and YKCNECGKAFSKGSNLTAHQRVH.

The protein belongs to the krueppel C2H2-type zinc-finger protein family.

Its subcellular location is the nucleus. Functionally, may be involved in transcriptional regulation. The sequence is that of Zinc finger protein 181 (ZNF181) from Pongo abelii (Sumatran orangutan).